A 266-amino-acid chain; its full sequence is Phosphate import ATP-binding protein PstB (266 aa).

In terms of domain architecture, ABC transporter spans 15–261; it reads VQKSVVNKLN…PKNKQTEDYI (247 aa). Residue 50 to 57 participates in ATP binding; it reads GPSGCGKS.

It belongs to the ABC transporter superfamily. Phosphate importer (TC 3.A.1.7) family. The complex is composed of two ATP-binding proteins (PstB), two transmembrane proteins (PstC and PstA) and a solute-binding protein (PstS).

The protein localises to the cell inner membrane. The catalysed reaction is phosphate(out) + ATP + H2O = ADP + 2 phosphate(in) + H(+). Its function is as follows. Part of the ABC transporter complex PstSACB involved in phosphate import. Responsible for energy coupling to the transport system. This is Phosphate import ATP-binding protein PstB from Nitrosomonas europaea (strain ATCC 19718 / CIP 103999 / KCTC 2705 / NBRC 14298).